The chain runs to 272 residues: NAD kinase (272 aa).

Catalysis depends on Asp62, which acts as the Proton acceptor. Residues 62–63 (DG), Arg67, 129–130 (NE), Arg140, Lys157, Asp159, 170–175 (SSYSSS), Ala194, and Gln229 each bind NAD(+).

The protein belongs to the NAD kinase family. A divalent metal cation is required as a cofactor.

The protein localises to the cytoplasm. It catalyses the reaction NAD(+) + ATP = ADP + NADP(+) + H(+). In terms of biological role, involved in the regulation of the intracellular balance of NAD and NADP, and is a key enzyme in the biosynthesis of NADP. Catalyzes specifically the phosphorylation on 2'-hydroxyl of the adenosine moiety of NAD to yield NADP. The protein is NAD kinase of Thermoplasma volcanium (strain ATCC 51530 / DSM 4299 / JCM 9571 / NBRC 15438 / GSS1).